Reading from the N-terminus, the 460-residue chain is Probable protein phosphatase 2C 38 (460 aa).

2 disordered regions span residues 1–30 (MVAV…AVPS) and 83–111 (RPMR…GRIA). The span at 100 to 109 (PRDREPRDGR) shows a compositional bias: basic and acidic residues. The 315-residue stretch at 118–432 (AASLYTMRGN…DDCAVVCLFL (315 aa)) folds into the PPM-type phosphatase domain. Mn(2+) contacts are provided by aspartate 154 and glycine 155. Residues 192–219 (VTSSMTEGGGTERMDRDTETPLGTEENG) are disordered. Positions 201 to 210 (GTERMDRDTE) are enriched in basic and acidic residues. Mn(2+) contacts are provided by aspartate 377 and aspartate 423.

This sequence belongs to the PP2C family. The cofactor is Mg(2+). Mn(2+) serves as cofactor.

The enzyme catalyses O-phospho-L-seryl-[protein] + H2O = L-seryl-[protein] + phosphate. The catalysed reaction is O-phospho-L-threonyl-[protein] + H2O = L-threonyl-[protein] + phosphate. The polypeptide is Probable protein phosphatase 2C 38 (Oryza sativa subsp. japonica (Rice)).